The chain runs to 206 residues: Thymidylate kinase (206 aa).

Residue 10-17 (GNDGSGKS) participates in ATP binding.

This sequence belongs to the thymidylate kinase family.

It catalyses the reaction dTMP + ATP = dTDP + ADP. Its function is as follows. Phosphorylation of dTMP to form dTDP in both de novo and salvage pathways of dTTP synthesis. The protein is Thymidylate kinase of Caldicellulosiruptor saccharolyticus (strain ATCC 43494 / DSM 8903 / Tp8T 6331).